The sequence spans 357 residues: Peptide chain release factor 1 (357 aa).

Position 234 is an N5-methylglutamine (Gln234).

Belongs to the prokaryotic/mitochondrial release factor family. Post-translationally, methylated by PrmC. Methylation increases the termination efficiency of RF1.

Its subcellular location is the cytoplasm. Functionally, peptide chain release factor 1 directs the termination of translation in response to the peptide chain termination codons UAG and UAA. This is Peptide chain release factor 1 from Chlorobaculum tepidum (strain ATCC 49652 / DSM 12025 / NBRC 103806 / TLS) (Chlorobium tepidum).